Here is a 346-residue protein sequence, read N- to C-terminus: Holliday junction branch migration complex subunit RuvB (346 aa).

The tract at residues 1-181 is large ATPase domain (RuvB-L); sequence MSDRNPLIDA…FGIPTRLNFY (181 aa). Residues leucine 20, arginine 21, glycine 62, lysine 65, threonine 66, threonine 67, 128-130, arginine 171, tyrosine 181, and arginine 218 each bind ATP; that span reads EDF. Position 66 (threonine 66) interacts with Mg(2+). The small ATPAse domain (RuvB-S) stretch occupies residues 182 to 252; it reads TVEELEYIVR…IADEALSRLE (71 aa). The head domain (RuvB-H) stretch occupies residues 255–346; the sequence is NRGLDQLDRR…SQYGLFMEDE (92 aa). 3 residues coordinate DNA: arginine 291, arginine 310, and arginine 315.

Belongs to the RuvB family. In terms of assembly, homohexamer. Forms an RuvA(8)-RuvB(12)-Holliday junction (HJ) complex. HJ DNA is sandwiched between 2 RuvA tetramers; dsDNA enters through RuvA and exits via RuvB. An RuvB hexamer assembles on each DNA strand where it exits the tetramer. Each RuvB hexamer is contacted by two RuvA subunits (via domain III) on 2 adjacent RuvB subunits; this complex drives branch migration. In the full resolvosome a probable DNA-RuvA(4)-RuvB(12)-RuvC(2) complex forms which resolves the HJ.

It localises to the cytoplasm. It catalyses the reaction ATP + H2O = ADP + phosphate + H(+). The RuvA-RuvB-RuvC complex processes Holliday junction (HJ) DNA during genetic recombination and DNA repair, while the RuvA-RuvB complex plays an important role in the rescue of blocked DNA replication forks via replication fork reversal (RFR). RuvA specifically binds to HJ cruciform DNA, conferring on it an open structure. The RuvB hexamer acts as an ATP-dependent pump, pulling dsDNA into and through the RuvAB complex. RuvB forms 2 homohexamers on either side of HJ DNA bound by 1 or 2 RuvA tetramers; 4 subunits per hexamer contact DNA at a time. Coordinated motions by a converter formed by DNA-disengaged RuvB subunits stimulates ATP hydrolysis and nucleotide exchange. Immobilization of the converter enables RuvB to convert the ATP-contained energy into a lever motion, pulling 2 nucleotides of DNA out of the RuvA tetramer per ATP hydrolyzed, thus driving DNA branch migration. The RuvB motors rotate together with the DNA substrate, which together with the progressing nucleotide cycle form the mechanistic basis for DNA recombination by continuous HJ branch migration. Branch migration allows RuvC to scan DNA until it finds its consensus sequence, where it cleaves and resolves cruciform DNA. This Brucella anthropi (strain ATCC 49188 / DSM 6882 / CCUG 24695 / JCM 21032 / LMG 3331 / NBRC 15819 / NCTC 12168 / Alc 37) (Ochrobactrum anthropi) protein is Holliday junction branch migration complex subunit RuvB.